A 680-amino-acid chain; its full sequence is Translation factor GUF1 homolog, chloroplastic (680 aa).

A chloroplast-targeting transit peptide spans 1–51; it reads MATATASRLAVPAPRTSPQAPGRRRPAAPLPSAPPRPRALSAAPRGRVVCP. The disordered stretch occupies residues 1 to 68; it reads MATATASRLA…ASTTDAGQDR (68 aa). Residues 28–37 show a composition bias toward pro residues; the sequence is APLPSAPPRP. Low complexity predominate over residues 38–60; sequence RALSAAPRGRVVCPAAPASSPAS. One can recognise a tr-type G domain in the interval 75–256; that stretch reads SNIRNFSIIA…AIVTKIPPPQ (182 aa). Residues 84 to 91, 149 to 153, and 203 to 206 contribute to the GTP site; these read AHIDHGKS, DTPGH, and NKID.

It belongs to the TRAFAC class translation factor GTPase superfamily. Classic translation factor GTPase family. LepA subfamily.

It is found in the plastid. It localises to the chloroplast. The enzyme catalyses GTP + H2O = GDP + phosphate + H(+). Its function is as follows. Promotes chloroplast protein synthesis. May act as a fidelity factor of the translation reaction, by catalyzing a one-codon backward translocation of tRNAs on improperly translocated ribosomes. This is Translation factor GUF1 homolog, chloroplastic from Oryza sativa subsp. japonica (Rice).